A 182-amino-acid polypeptide reads, in one-letter code: Isopentenyl-diphosphate Delta-isomerase (182 aa).

The Mn(2+) site is built by H25 and H32. Residues 30 to 164 enclose the Nudix hydrolase domain; it reads LLHLAFSSWL…PWAFSPWMVM (135 aa). The active site involves C67. H69 lines the Mn(2+) pocket. E87 contacts Mg(2+). E114 and E116 together coordinate Mn(2+). Residue E116 is part of the active site.

The protein belongs to the IPP isomerase type 1 family. In terms of assembly, homodimer. Requires Mg(2+) as cofactor. Mn(2+) serves as cofactor.

The protein resides in the cytoplasm. The catalysed reaction is isopentenyl diphosphate = dimethylallyl diphosphate. The protein operates within isoprenoid biosynthesis; dimethylallyl diphosphate biosynthesis; dimethylallyl diphosphate from isopentenyl diphosphate: step 1/1. Its function is as follows. Catalyzes the 1,3-allylic rearrangement of the homoallylic substrate isopentenyl (IPP) to its highly electrophilic allylic isomer, dimethylallyl diphosphate (DMAPP). The chain is Isopentenyl-diphosphate Delta-isomerase from Escherichia coli O45:K1 (strain S88 / ExPEC).